An 82-amino-acid polypeptide reads, in one-letter code: Small ribosomal subunit protein uS17 (82 aa).

The protein belongs to the universal ribosomal protein uS17 family. As to quaternary structure, part of the 30S ribosomal subunit.

Functionally, one of the primary rRNA binding proteins, it binds specifically to the 5'-end of 16S ribosomal RNA. This Shewanella frigidimarina (strain NCIMB 400) protein is Small ribosomal subunit protein uS17.